Here is a 201-residue protein sequence, read N- to C-terminus: Adenylyl-sulfate kinase (201 aa).

Residue 35–42 (GLSGSGKS) participates in ATP binding. The Phosphoserine intermediate role is filled by Ser-109.

This sequence belongs to the APS kinase family.

The catalysed reaction is adenosine 5'-phosphosulfate + ATP = 3'-phosphoadenylyl sulfate + ADP + H(+). It participates in sulfur metabolism; hydrogen sulfide biosynthesis; sulfite from sulfate: step 2/3. In terms of biological role, catalyzes the synthesis of activated sulfate. The polypeptide is Adenylyl-sulfate kinase (Prochlorococcus marinus (strain SARG / CCMP1375 / SS120)).